The primary structure comprises 134 residues: Small ribosomal subunit protein uS11 (134 aa).

The segment at 114–134 is disordered; it reads TPVPHNGTRPPRKWFKRQEKR. Residues 123–134 are compositionally biased toward basic residues; that stretch reads PPRKWFKRQEKR.

This sequence belongs to the universal ribosomal protein uS11 family. In terms of assembly, part of the 30S ribosomal subunit. Interacts with proteins S7 and S18. Binds to IF-3.

In terms of biological role, located on the platform of the 30S subunit, it bridges several disparate RNA helices of the 16S rRNA. Forms part of the Shine-Dalgarno cleft in the 70S ribosome. This chain is Small ribosomal subunit protein uS11, found in Mesomycoplasma hyopneumoniae (strain 232) (Mycoplasma hyopneumoniae).